We begin with the raw amino-acid sequence, 432 residues long: Phosphoribosylamine--glycine ligase (432 aa).

The ATP-grasp domain occupies 110-316 (RNFMKDNDIE…MIDVMSAVVN (207 aa)). Residue 137 to 194 (IEELGSVAIKPAGLTGGKGVKVMGDQLPDTGAAYDYAVSLLDGDNVVVEENLVGEEFT) participates in ATP binding. Positions 274, 286, and 288 each coordinate Mg(2+). Mn(2+)-binding residues include Gln274, Glu286, and Asn288.

It belongs to the GARS family. Mg(2+) serves as cofactor. Requires Mn(2+) as cofactor.

It carries out the reaction 5-phospho-beta-D-ribosylamine + glycine + ATP = N(1)-(5-phospho-beta-D-ribosyl)glycinamide + ADP + phosphate + H(+). It participates in purine metabolism; IMP biosynthesis via de novo pathway; N(1)-(5-phospho-D-ribosyl)glycinamide from 5-phospho-alpha-D-ribose 1-diphosphate: step 2/2. This Methanococcoides burtonii (strain DSM 6242 / NBRC 107633 / OCM 468 / ACE-M) protein is Phosphoribosylamine--glycine ligase.